The sequence spans 361 residues: Queuine tRNA-ribosyltransferase (361 aa).

Asp-92 functions as the Proton acceptor in the catalytic mechanism. Substrate is bound by residues 92 to 96, Asp-146, Gln-189, and Gly-216; that span reads DSGGF. The tract at residues 247-253 is RNA binding; sequence GVGKPAD. The active-site Nucleophile is the Asp-266. The RNA binding; important for wobble base 34 recognition stretch occupies residues 271-275; that stretch reads TRSGR. Positions 304, 306, 309, and 335 each coordinate Zn(2+).

This sequence belongs to the queuine tRNA-ribosyltransferase family. In terms of assembly, homodimer. Within each dimer, one monomer is responsible for RNA recognition and catalysis, while the other monomer binds to the replacement base PreQ1. The cofactor is Zn(2+).

It carries out the reaction 7-aminomethyl-7-carbaguanine + guanosine(34) in tRNA = 7-aminomethyl-7-carbaguanosine(34) in tRNA + guanine. The protein operates within tRNA modification; tRNA-queuosine biosynthesis. Its function is as follows. Catalyzes the base-exchange of a guanine (G) residue with the queuine precursor 7-aminomethyl-7-deazaguanine (PreQ1) at position 34 (anticodon wobble position) in tRNAs with GU(N) anticodons (tRNA-Asp, -Asn, -His and -Tyr). Catalysis occurs through a double-displacement mechanism. The nucleophile active site attacks the C1' of nucleotide 34 to detach the guanine base from the RNA, forming a covalent enzyme-RNA intermediate. The proton acceptor active site deprotonates the incoming PreQ1, allowing a nucleophilic attack on the C1' of the ribose to form the product. After dissociation, two additional enzymatic reactions on the tRNA convert PreQ1 to queuine (Q), resulting in the hypermodified nucleoside queuosine (7-(((4,5-cis-dihydroxy-2-cyclopenten-1-yl)amino)methyl)-7-deazaguanosine). The sequence is that of Queuine tRNA-ribosyltransferase from Rickettsia canadensis (strain McKiel).